The primary structure comprises 205 residues: Large ribosomal subunit protein bL21 (205 aa).

A disordered region spans residues 107–137 (APAKKAAAKKEEAPKADTAPKAAAAPTEEAA). Residues 122 to 137 (ADTAPKAAAAPTEEAA) show a composition bias toward low complexity.

This sequence belongs to the bacterial ribosomal protein bL21 family. As to quaternary structure, part of the 50S ribosomal subunit. Contacts protein L20.

This protein binds to 23S rRNA in the presence of protein L20. This is Large ribosomal subunit protein bL21 from Hyphomonas neptunium (strain ATCC 15444).